Here is a 535-residue protein sequence, read N- to C-terminus: GMP synthase [glutamine-hydrolyzing] (535 aa).

One can recognise a Glutamine amidotransferase type-1 domain in the interval 20–210; the sequence is PVLVVDFGAQ…LHRCAALPND (191 aa). Cysteine 97 acts as the Nucleophile in catalysis. Catalysis depends on residues histidine 184 and glutamate 186. The 199-residue stretch at 211-409 folds into the GMPS ATP-PPase domain; it reads WDASSIIEDQ…LGLPDEIVWR (199 aa). 238–244 contacts ATP; that stretch reads SGGVDSA.

As to quaternary structure, homodimer.

It catalyses the reaction XMP + L-glutamine + ATP + H2O = GMP + L-glutamate + AMP + diphosphate + 2 H(+). It participates in purine metabolism; GMP biosynthesis; GMP from XMP (L-Gln route): step 1/1. In terms of biological role, catalyzes the synthesis of GMP from XMP. This Bifidobacterium longum (strain NCC 2705) protein is GMP synthase [glutamine-hydrolyzing].